A 310-amino-acid chain; its full sequence is ADP-L-glycero-D-manno-heptose-6-epimerase (310 aa).

Residues Phe10–Ile11, Asp31–Asn32, Lys38, Lys53, Glu75–Ser79, and Asn92 contribute to the NADP(+) site. The active-site Proton acceptor is Tyr140. Lys144 contacts NADP(+). Asn169 contacts substrate. 2 residues coordinate NADP(+): Val170 and Lys178. Lys178 functions as the Proton acceptor in the catalytic mechanism. Substrate contacts are provided by residues Ser180, His187, Phe201 to Ser204, Arg209, and Tyr272.

This sequence belongs to the NAD(P)-dependent epimerase/dehydratase family. HldD subfamily. Homopentamer. It depends on NADP(+) as a cofactor.

The enzyme catalyses ADP-D-glycero-beta-D-manno-heptose = ADP-L-glycero-beta-D-manno-heptose. The protein operates within nucleotide-sugar biosynthesis; ADP-L-glycero-beta-D-manno-heptose biosynthesis; ADP-L-glycero-beta-D-manno-heptose from D-glycero-beta-D-manno-heptose 7-phosphate: step 4/4. Catalyzes the interconversion between ADP-D-glycero-beta-D-manno-heptose and ADP-L-glycero-beta-D-manno-heptose via an epimerization at carbon 6 of the heptose. This chain is ADP-L-glycero-D-manno-heptose-6-epimerase, found in Salmonella newport (strain SL254).